Reading from the N-terminus, the 513-residue chain is Glycogen synthase (513 aa).

Lysine 47 contributes to the ADP-alpha-D-glucose binding site.

This sequence belongs to the glycosyltransferase 1 family. Bacterial/plant glycogen synthase subfamily.

The catalysed reaction is [(1-&gt;4)-alpha-D-glucosyl](n) + ADP-alpha-D-glucose = [(1-&gt;4)-alpha-D-glucosyl](n+1) + ADP + H(+). It functions in the pathway glycan biosynthesis; glycogen biosynthesis. Its function is as follows. Synthesizes alpha-1,4-glucan chains using ADP-glucose. The chain is Glycogen synthase from Pseudomonas paraeruginosa (strain DSM 24068 / PA7) (Pseudomonas aeruginosa (strain PA7)).